A 225-amino-acid chain; its full sequence is Orotate phosphoribosyltransferase (225 aa).

Residue lysine 32 coordinates 5-phospho-alpha-D-ribose 1-diphosphate. An orotate-binding site is contributed by 40 to 41 (FF). Residues 78 to 79 (YK), arginine 104, lysine 105, lysine 108, histidine 110, and 129 to 137 (DDVISAGTS) each bind 5-phospho-alpha-D-ribose 1-diphosphate. Orotate-binding residues include serine 133 and arginine 161.

It belongs to the purine/pyrimidine phosphoribosyltransferase family. PyrE subfamily. As to quaternary structure, homodimer. It depends on Mg(2+) as a cofactor.

It carries out the reaction orotidine 5'-phosphate + diphosphate = orotate + 5-phospho-alpha-D-ribose 1-diphosphate. It functions in the pathway pyrimidine metabolism; UMP biosynthesis via de novo pathway; UMP from orotate: step 1/2. In terms of biological role, catalyzes the transfer of a ribosyl phosphate group from 5-phosphoribose 1-diphosphate to orotate, leading to the formation of orotidine monophosphate (OMP). The polypeptide is Orotate phosphoribosyltransferase (Cupriavidus metallidurans (strain ATCC 43123 / DSM 2839 / NBRC 102507 / CH34) (Ralstonia metallidurans)).